Consider the following 464-residue polypeptide: Citrate synthase, mitochondrial (464 aa).

Residues 1–27 (MALLTAATRLLGAKNSSCLVLAARHAS) constitute a mitochondrion transit peptide. The short motif at 2 to 21 (ALLTAATRLLGAKNSSCLVL) is the SIFI-degron element. N6-succinyllysine is present on Lys-57. Lys-76 carries the N6-acetyllysine; alternate modification. Position 76 is an N6-succinyllysine; alternate (Lys-76). N6-succinyllysine occurs at positions 103 and 193. Ser-226 is modified (phosphoserine). His-301 is an active-site residue. Residues Lys-321 and Lys-327 each carry the N6-acetyllysine; alternate modification. Residues Lys-321 and Lys-327 each carry the N6-succinyllysine; alternate modification. Residue His-347 is part of the active site. Residue Arg-356 participates in oxaloacetate binding. Position 375 is an N6-acetyllysine; alternate (Lys-375). The residue at position 375 (Lys-375) is an N6-succinyllysine; alternate. N6-acetyllysine is present on Lys-382. Lys-393 carries the post-translational modification N6-acetyllysine; alternate. Lys-393 is modified (N6-succinyllysine; alternate). The residue at position 395 (Lys-395) is an N6,N6,N6-trimethyllysine. Residue Asp-402 is part of the active site. Oxaloacetate contacts are provided by Arg-428 and Arg-448. Lys-450 bears the N6-succinyllysine mark. Lys-459 carries the post-translational modification N6-acetyllysine; alternate. An N6-succinyllysine; alternate modification is found at Lys-459.

This sequence belongs to the citrate synthase family. As to quaternary structure, homodimer. Post-translationally, methylated. Trimethylation at Lys-395 by CSKMT decreases citrate synthase activity. In terms of processing, in response to mitochondrial stress, the precursor protein is ubiquitinated by the SIFI complex in the cytoplasm before mitochondrial import, leading to its degradation. Within the SIFI complex, UBR4 initiates ubiquitin chain that are further elongated or branched by KCMF1.

It localises to the mitochondrion matrix. It catalyses the reaction oxaloacetate + acetyl-CoA + H2O = citrate + CoA + H(+). The protein operates within carbohydrate metabolism; tricarboxylic acid cycle; isocitrate from oxaloacetate: step 1/2. Its function is as follows. Key enzyme of the Krebs tricarboxylic acid cycle which catalyzes the synthesis of citrate from acetyl coenzyme A and oxaloacetate. In Mus musculus (Mouse), this protein is Citrate synthase, mitochondrial (Cs).